Reading from the N-terminus, the 358-residue chain is Transmembrane protein 144 homolog B (358 aa).

The next 10 helical transmembrane spans lie at 6 to 26 (VIGY…YVPV), 35 to 55 (LAFT…AMFI), 60 to 79 (IFDP…NFCV), 86 to 108 (IGIG…FTGK), 122 to 142 (PALN…FFFI), 211 to 231 (ILGI…MVPM), 244 to 264 (LSFV…VFIV), 279 to 299 (IFPS…LMVA), 307 to 327 (IGFP…SVFY), and 337 to 357 (LLIL…LALS).

It belongs to the TMEM144 family.

It localises to the membrane. The sequence is that of Transmembrane protein 144 homolog B (tmem144B) from Dictyostelium discoideum (Social amoeba).